The chain runs to 180 residues: WPP domain-containing protein 2 (180 aa).

The segment covering 1-26 (MAETAETINTTISSPPPESESSTTIS) has biased composition (low complexity). Disordered stretches follow at residues 1-61 (MAET…LRIW) and 140-180 (SVKA…KSEA). Residues 27–36 (AMTDPTSQEA) show a composition bias toward polar residues. Positions 37-53 (ASKDTDLTKEAESEKKP) are enriched in basic and acidic residues. Residues 44-147 (TKEAESEKKP…LESVKARSNA (104 aa)) are WPP. The residue at position 173 (Ser-173) is a Phosphoserine.

Binds to FPP proteins. Interacts with WAP, WIP1, WIP2 and WIP3 through its WPP domain. Interacts with WIT1 and HSP70-1. Expressed in roots, stems, leaves and flowers.

The protein resides in the nucleus envelope. It is found in the cytoplasm. Its subcellular location is the nucleus. The protein localises to the golgi apparatus. Functionally, regulates the mitotic activity in roots. Plays a role with HSP70-1 in facilitating WIT1 nuclear envelope targeting. This Arabidopsis thaliana (Mouse-ear cress) protein is WPP domain-containing protein 2 (WPP2).